The primary structure comprises 259 residues: DNA-directed RNA polymerase 30 kDa polypeptide (259 aa).

The TFIIS-type zinc-finger motif lies at 155 to 195; sequence YNTPCPNCKSRNTTPMMIQTRAADEPPLVRHACRDCKQHFK. Residues C159, C162, C187, and C190 each coordinate Zn(2+). The tract at residues 220–259 is disordered; the sequence is EILPDNNPSPPESPEPASPIDDGLIRVTFDRNDEPPEDDE. Pro residues predominate over residues 226–236; sequence NPSPPESPEPA.

This sequence belongs to the poxviridae DNA-directed RNA polymerase 30 kDa subunit family. As to quaternary structure, the DNA-dependent RNA polymerase (vRNAP) consists of eight subunits encoded by early viral genes and termed according to their apparent molecular masses Rpo147, Rpo132, Rpo35, Rpo30, Rpo22, Rpo19, Rpo18, and Rpo7. The same holoenzyme, with the addition of the transcription-specificity factor RAP94, is used for early gene expression.

The protein localises to the virion. It localises to the host cytoplasm. The catalysed reaction is RNA(n) + a ribonucleoside 5'-triphosphate = RNA(n+1) + diphosphate. Functionally, part of the DNA-dependent RNA polymerase which catalyzes the transcription of viral DNA into RNA using the four ribonucleoside triphosphates as substrates. Responsible for the transcription of early, intermediate and late genes. DNA-dependent RNA polymerase associates with the early transcription factor (ETF), itself composed of OPG118 and OPG134, thereby allowing the early genes transcription. Late transcription, and probably also intermediate transcription, require newly synthesized RNA polymerase. The sequence is that of DNA-directed RNA polymerase 30 kDa polypeptide (OPG066) from Variola virus (isolate Human/India/Ind3/1967) (VARV).